An 844-amino-acid chain; its full sequence is Janus kinase and microtubule-interacting protein 3 (844 aa).

The stretch at 8–259 (SRAKGDKAET…LSQAKEAERH (252 aa)) forms a coiled coil. Residues 249-290 (QLSQAKEAERHPGSPRRELPYASGAGDASDHSGSPEQQLDEK) are disordered. Residues 254–267 (KEAERHPGSPRREL) show a composition bias toward basic and acidic residues. A compositionally biased stretch (low complexity) spans 270-282 (ASGAGDASDHSGS). Residues 289-421 (EKDARRFQLK…DELSKTLETA (133 aa)) are a coiled coil. S384 is modified (phosphoserine). Residues 466-483 (SDGSSISYQTDRTDQTPC) show a composition bias toward polar residues. The tract at residues 466 to 488 (SDGSSISYQTDRTDQTPCTPEDD) is disordered. 2 coiled-coil regions span residues 493-621 (MAKE…RERK) and 688-833 (EKWL…LFLF).

This sequence belongs to the JAKMIP family.

The protein localises to the golgi apparatus. This Mus musculus (Mouse) protein is Janus kinase and microtubule-interacting protein 3 (Jakmip3).